Consider the following 82-residue polypeptide: Penaeidin-3d (82 aa).

The first 19 residues, 1–19 (MRLVVCLVFLASFALVCQG), serve as a signal peptide directing secretion. The residue at position 20 (Gln-20) is a Pyrrolidone carboxylic acid. 3 disulfide bridges follow: Cys-51–Cys-66, Cys-55–Cys-73, and Cys-67–Cys-74. Ser-81 is subject to Serine amide.

It belongs to the penaeidin family.

It is found in the cytoplasmic granule. Its function is as follows. Antibacterial and antifungal activity. Presents chitin-binding activity. This Penaeus vannamei (Whiteleg shrimp) protein is Penaeidin-3d.